Consider the following 754-residue polypeptide: Carbon catabolite repressor protein 4 homolog 6 (754 aa).

2 disordered regions span residues 34–65 (PYRG…DQFV) and 85–176 (EPYR…KTPP). Positions 50-61 (FSDRPYNDDAGR) are enriched in basic and acidic residues. Composition is skewed to polar residues over residues 96-106 (QRQQPPFNQNY) and 116-133 (GQWQ…NQNY). Basic and acidic residues predominate over residues 162–171 (KPSDYREWEY). A Mg(2+)-binding site is contributed by Glu-237. Disordered stretches follow at residues 404–431 (VSAE…QGQV) and 494–558 (IENR…DQDI). Composition is skewed to polar residues over residues 415–431 (NYTT…QGQV), 503–525 (GNLS…QHAS), and 534–545 (DRSVSSGLSETE).

Belongs to the CCR4/nocturin family. As to quaternary structure, component of the CCR4-NOT complex, at least composed of CRR4 and CAF1 proteins. The cofactor is Mg(2+).

The protein localises to the nucleus. Its subcellular location is the cytoplasm. It carries out the reaction Exonucleolytic cleavage of poly(A) to 5'-AMP.. Acts as a catalytic component of the CCR4-NOT core complex, which in the nucleus seems to be a general transcription factor, and in the cytoplasm the major mRNA deadenylase involved in mRNA turnover. In Arabidopsis thaliana (Mouse-ear cress), this protein is Carbon catabolite repressor protein 4 homolog 6 (CCR4-6).